Reading from the N-terminus, the 201-residue chain is FMN-dependent NADH:quinone oxidoreductase (201 aa).

Residues Ser10, 16–18, 96–99, and 140–143 contribute to the FMN site; these read SQS, MYNF, and SRGG.

This sequence belongs to the azoreductase type 1 family. In terms of assembly, homodimer. The cofactor is FMN.

The enzyme catalyses 2 a quinone + NADH + H(+) = 2 a 1,4-benzosemiquinone + NAD(+). It catalyses the reaction N,N-dimethyl-1,4-phenylenediamine + anthranilate + 2 NAD(+) = 2-(4-dimethylaminophenyl)diazenylbenzoate + 2 NADH + 2 H(+). Quinone reductase that provides resistance to thiol-specific stress caused by electrophilic quinones. Functionally, also exhibits azoreductase activity. Catalyzes the reductive cleavage of the azo bond in aromatic azo compounds to the corresponding amines. The chain is FMN-dependent NADH:quinone oxidoreductase from Salmonella choleraesuis (strain SC-B67).